Here is a 530-residue protein sequence, read N- to C-terminus: Membrane-associated transporter protein (530 aa).

The Cytoplasmic portion of the chain corresponds to 1–45 (MSGSNGPTDTHTYQSLAEDCPFGSVEQPKRSTGRLVMHSMAMFGR). A helical transmembrane segment spans residues 46–66 (EFCYAVEAAYVTPVLLSVGLP). The Extracellular segment spans residues 67–68 (KS). A helical membrane pass occupies residues 69–89 (LYSMVWLLSPILGFLLQPVVG). The Cytoplasmic segment spans residues 90–105 (SASDHCRARWGRRRPY). A helical transmembrane segment spans residues 106–126 (ILTLAIMMLLGMALYLNGDAV). Residues 127–138 (VSALVANPRQKL) are Extracellular-facing. A helical membrane pass occupies residues 139-159 (IWAISITMVGVVLFDFSADFI). Over 160–184 (DGPIKAYLFDVCSHQDKEKGLHYHA) the chain is Cytoplasmic. The chain crosses the membrane as a helical span at residues 185-205 (LFTGFGGALGYILGAIDWVHL). Topologically, residues 206–216 (DLGRLLGTEFQ) are extracellular. A helical membrane pass occupies residues 217–237 (VMFFFSALVLILCFITHLCSI). Residues 238–318 (PEAPLRDAAT…ALVNMPSHYR (81 aa)) are Cytoplasmic-facing. A disordered region spans residues 275 to 299 (KNGGADTEQPVQEWKNKKPSGQSQR). A helical transmembrane segment spans residues 319 to 339 (CLCVSHLIGWTAFLSNMLFFT). The Extracellular portion of the chain corresponds to 340 to 366 (DFMGQIVYHGDPYGAHNSTEFLIYERG). Asn356 is a glycosylation site (N-linked (GlcNAc...) asparagine). Residues 367–387 (VEVGCWGLCINSVFSSVYSYF) traverse the membrane as a helical segment. The Cytoplasmic segment spans residues 388 to 398 (QKAMVSYIGLK). A helical membrane pass occupies residues 399–419 (GLYFMGYLLFGLGTGFIGLFP). The Extracellular portion of the chain corresponds to 420–425 (NVYSTL). The chain crosses the membrane as a helical span at residues 426–446 (VLCSMFGVMSSTLYTVPFNLI). Topologically, residues 447-477 (AEYHREEEKEKGQEAPGGPDNQGRGKGVDCA) are cytoplasmic. The chain crosses the membrane as a helical span at residues 478–498 (ALTCMVQLAQILVGGGLGFLV). The Extracellular segment spans residues 499–504 (NMAGSV). The helical transmembrane segment at 505-525 (VVVVITASAVSLIGCCFVALF) threads the bilayer. At 526 to 530 (VRYVD) the chain is on the cytoplasmic side.

The protein belongs to the glycoside-pentoside-hexuronide (GPH) cation symporter transporter (TC 2.A.2) family. As to quaternary structure, interacts with TYRP1. In terms of tissue distribution, mainly expressed in eyeballs and skin melanocytes. Also detected in kidney, colon, gall bladder and pancreas.

It is found in the melanosome membrane. It carries out the reaction sucrose(out) + H(+)(out) = sucrose(in) + H(+)(in). The enzyme catalyses D-glucose(out) + H(+)(out) = D-glucose(in) + H(+)(in). Functionally, proton-associated glucose and sucrose transporter. May be able to transport also fructose. Expressed at a late melanosome maturation stage where functions as a proton/glucose exporter which increase lumenal pH by decreasing glycolysis. Regulates melanogenesis by maintaining melanosome neutralization that is initially initiated by transient OCA2 and required for a proper function of the tyrosinase TYR. The protein is Membrane-associated transporter protein (Slc45a2) of Mus musculus (Mouse).